Consider the following 40-residue polypeptide: Photosystem II reaction center protein J (40 aa).

A helical transmembrane segment spans residues 8–28 (IPLWLIGTVTGIIVIGLLGIF).

Belongs to the PsbJ family. PSII is composed of 1 copy each of membrane proteins PsbA, PsbB, PsbC, PsbD, PsbE, PsbF, PsbH, PsbI, PsbJ, PsbK, PsbL, PsbM, PsbT, PsbX, PsbY, PsbZ, Psb30/Ycf12, at least 3 peripheral proteins of the oxygen-evolving complex and a large number of cofactors. It forms dimeric complexes.

The protein resides in the plastid. It localises to the chloroplast thylakoid membrane. Functionally, one of the components of the core complex of photosystem II (PSII). PSII is a light-driven water:plastoquinone oxidoreductase that uses light energy to abstract electrons from H(2)O, generating O(2) and a proton gradient subsequently used for ATP formation. It consists of a core antenna complex that captures photons, and an electron transfer chain that converts photonic excitation into a charge separation. This Pinus koraiensis (Korean pine) protein is Photosystem II reaction center protein J.